The following is a 631-amino-acid chain: FAST kinase domain-containing protein 4 (631 aa).

A mitochondrion-targeting transit peptide spans Met-1–Leu-107. The residue at position 553 (Ser-553) is a Phosphoserine. The 59-residue stretch at Leu-561–Asp-619 folds into the RAP domain.

This sequence belongs to the FAST kinase family. In terms of tissue distribution, ubiquitously expressed. Expression detected in spleen, thymus, testis, ovary, colon, heart, smooth muscle, kidney, brain, lung, liver and white adipose tissue with highest expression in smooth muscle.

It localises to the mitochondrion matrix. Its function is as follows. Plays a role in processing of mitochondrial RNA precursors and in stabilization of a subset of mature mitochondrial RNA species, such as MT-CO1, MT-CO2, MT-CYB, MT-CO3, MT-ND3, MT-ND5 and MT-ATP8/6. May play a role in cell cycle progression. This chain is FAST kinase domain-containing protein 4, found in Homo sapiens (Human).